The sequence spans 182 residues: ATP synthase subunit delta (182 aa).

Belongs to the ATPase delta chain family. In terms of assembly, F-type ATPases have 2 components, F(1) - the catalytic core - and F(0) - the membrane proton channel. F(1) has five subunits: alpha(3), beta(3), gamma(1), delta(1), epsilon(1). CF(0) has four main subunits: a(1), b(1), b'(1) and c(10-14). The alpha and beta chains form an alternating ring which encloses part of the gamma chain. F(1) is attached to F(0) by a central stalk formed by the gamma and epsilon chains, while a peripheral stalk is formed by the delta, b and b' chains.

It is found in the cellular thylakoid membrane. F(1)F(0) ATP synthase produces ATP from ADP in the presence of a proton or sodium gradient. F-type ATPases consist of two structural domains, F(1) containing the extramembraneous catalytic core and F(0) containing the membrane proton channel, linked together by a central stalk and a peripheral stalk. During catalysis, ATP synthesis in the catalytic domain of F(1) is coupled via a rotary mechanism of the central stalk subunits to proton translocation. Its function is as follows. This protein is part of the stalk that links CF(0) to CF(1). It either transmits conformational changes from CF(0) to CF(1) or is implicated in proton conduction. The protein is ATP synthase subunit delta of Synechococcus sp. (strain CC9605).